The sequence spans 558 residues: Oxygen-dependent choline dehydrogenase (558 aa).

8–37 (DYIIIGAGSAGNVLATRLTEDSDVSVLLLE) provides a ligand contact to FAD. Catalysis depends on histidine 475, which acts as the Proton acceptor.

It belongs to the GMC oxidoreductase family. It depends on FAD as a cofactor.

It carries out the reaction choline + A = betaine aldehyde + AH2. The catalysed reaction is betaine aldehyde + NAD(+) + H2O = glycine betaine + NADH + 2 H(+). The protein operates within amine and polyamine biosynthesis; betaine biosynthesis via choline pathway; betaine aldehyde from choline (cytochrome c reductase route): step 1/1. In terms of biological role, involved in the biosynthesis of the osmoprotectant glycine betaine. Catalyzes the oxidation of choline to betaine aldehyde and betaine aldehyde to glycine betaine at the same rate. The sequence is that of Oxygen-dependent choline dehydrogenase from Chromohalobacter salexigens (strain ATCC BAA-138 / DSM 3043 / CIP 106854 / NCIMB 13768 / 1H11).